A 175-amino-acid polypeptide reads, in one-letter code: MSHKDFNGLQAPQLLSSSSPVAKKQSSHKLRHALKHARYLNHSSKRTLKHALELHEDNQVLLEKEGSPNFQDWLSKQPGVNKTSLKYNKSLGSWISKESKPKKRFPPYFTYKGSKTTPEEAKALQQMKQSQKRFFHENMHSFLNEVAHNPMIQRFKQKQAKRAANTRQRTYKYRQ.

Disordered regions lie at residues 1–32 (MSHKDFNGLQAPQLLSSSSPVAKKQSSHKLRH) and 156–175 (KQKQAKRAANTRQRTYKYRQ). Residues 14–24 (LLSSSSPVAKK) show a composition bias toward low complexity.

This is an uncharacterized protein from Mycoplasma pneumoniae (strain ATCC 29342 / M129 / Subtype 1) (Mycoplasmoides pneumoniae).